Here is a 607-residue protein sequence, read N- to C-terminus: Dihydroxy-acid dehydratase (607 aa).

Aspartate 81 contributes to the Mg(2+) binding site. Residue cysteine 122 coordinates [2Fe-2S] cluster. The Mg(2+) site is built by aspartate 123 and lysine 124. Position 124 is an N6-carboxylysine (lysine 124). [2Fe-2S] cluster is bound at residue cysteine 195. Glutamate 489 is a binding site for Mg(2+). Residue serine 515 is the Proton acceptor of the active site.

The protein belongs to the IlvD/Edd family. As to quaternary structure, homodimer. The cofactor is [2Fe-2S] cluster. Mg(2+) is required as a cofactor.

The enzyme catalyses (2R)-2,3-dihydroxy-3-methylbutanoate = 3-methyl-2-oxobutanoate + H2O. The catalysed reaction is (2R,3R)-2,3-dihydroxy-3-methylpentanoate = (S)-3-methyl-2-oxopentanoate + H2O. Its pathway is amino-acid biosynthesis; L-isoleucine biosynthesis; L-isoleucine from 2-oxobutanoate: step 3/4. It participates in amino-acid biosynthesis; L-valine biosynthesis; L-valine from pyruvate: step 3/4. In terms of biological role, functions in the biosynthesis of branched-chain amino acids. Catalyzes the dehydration of (2R,3R)-2,3-dihydroxy-3-methylpentanoate (2,3-dihydroxy-3-methylvalerate) into 2-oxo-3-methylpentanoate (2-oxo-3-methylvalerate) and of (2R)-2,3-dihydroxy-3-methylbutanoate (2,3-dihydroxyisovalerate) into 2-oxo-3-methylbutanoate (2-oxoisovalerate), the penultimate precursor to L-isoleucine and L-valine, respectively. This Deinococcus radiodurans (strain ATCC 13939 / DSM 20539 / JCM 16871 / CCUG 27074 / LMG 4051 / NBRC 15346 / NCIMB 9279 / VKM B-1422 / R1) protein is Dihydroxy-acid dehydratase.